A 340-amino-acid chain; its full sequence is Dihydroorotate dehydrogenase (quinone) (340 aa).

Residues 67 to 71 (AGFDK) and Thr91 each bind FMN. Lys71 lines the substrate pocket. Substrate is bound at residue 116–120 (NRMGF). Residues Asn143 and Asn176 each contribute to the FMN site. Asn176 contributes to the substrate binding site. The active-site Nucleophile is Ser179. A substrate-binding site is contributed by Asn181. Lys217 and Thr245 together coordinate FMN. 246–247 (NT) provides a ligand contact to substrate. Residues Gly267, Gly296, and 317–318 (YT) each bind FMN.

The protein belongs to the dihydroorotate dehydrogenase family. Type 2 subfamily. In terms of assembly, monomer. Requires FMN as cofactor.

It localises to the cell membrane. The catalysed reaction is (S)-dihydroorotate + a quinone = orotate + a quinol. Its pathway is pyrimidine metabolism; UMP biosynthesis via de novo pathway; orotate from (S)-dihydroorotate (quinone route): step 1/1. In terms of biological role, catalyzes the conversion of dihydroorotate to orotate with quinone as electron acceptor. The sequence is that of Dihydroorotate dehydrogenase (quinone) from Christiangramia forsetii (strain DSM 17595 / CGMCC 1.15422 / KT0803) (Gramella forsetii).